Consider the following 230-residue polypeptide: uncharacterized protein (230 aa).

In terms of domain architecture, HTH gntR-type spans 12 to 80 (KNLSYVLAEK…PRIGTRVMPQ (69 aa)). The segment at residues 40-59 (EIELGEQFGVSRTAVREAVK) is a DNA-binding region (H-T-H motif).

This is an uncharacterized protein from Escherichia coli (strain K12).